Reading from the N-terminus, the 366-residue chain is Chorismate synthase (366 aa).

Residues R48 and R54 each contribute to the NADP(+) site. FMN contacts are provided by residues 125 to 127 (RSS), 238 to 239 (NA), G278, 293 to 297 (KPTSS), and R319.

Belongs to the chorismate synthase family. In terms of assembly, homotetramer. Requires FMNH2 as cofactor.

It catalyses the reaction 5-O-(1-carboxyvinyl)-3-phosphoshikimate = chorismate + phosphate. It participates in metabolic intermediate biosynthesis; chorismate biosynthesis; chorismate from D-erythrose 4-phosphate and phosphoenolpyruvate: step 7/7. Catalyzes the anti-1,4-elimination of the C-3 phosphate and the C-6 proR hydrogen from 5-enolpyruvylshikimate-3-phosphate (EPSP) to yield chorismate, which is the branch point compound that serves as the starting substrate for the three terminal pathways of aromatic amino acid biosynthesis. This reaction introduces a second double bond into the aromatic ring system. The protein is Chorismate synthase of Chromobacterium violaceum (strain ATCC 12472 / DSM 30191 / JCM 1249 / CCUG 213 / NBRC 12614 / NCIMB 9131 / NCTC 9757 / MK).